We begin with the raw amino-acid sequence, 248 residues long: Glucosamine-6-phosphate isomerase (248 aa).

The active-site Proton acceptor; for enolization step is Asp-68. Glu-137 (for ring-opening step) is an active-site residue. Catalysis depends on His-139, which acts as the Proton acceptor; for ring-opening step. The active-site For ring-opening step is Glu-144.

Belongs to the glucosamine/galactosamine-6-phosphate isomerase family. As to quaternary structure, monomer.

It catalyses the reaction alpha-D-glucosamine 6-phosphate + H2O = beta-D-fructose 6-phosphate + NH4(+). The chain is Glucosamine-6-phosphate isomerase (NAG1) from Candida albicans (strain SC5314 / ATCC MYA-2876) (Yeast).